The primary structure comprises 461 residues: Ribosomal protein uS12 methylthiotransferase RimO (461 aa).

One can recognise an MTTase N-terminal domain in the interval 13 to 128 (PKVGFVSLGC…VMQHVHMHLP (116 aa)). The [4Fe-4S] cluster site is built by cysteine 22, cysteine 58, cysteine 87, cysteine 159, cysteine 163, and cysteine 166. Positions 145 to 390 (LTPRHYAYLK…MEVAEEVSAK (246 aa)) constitute a Radical SAM core domain. Residues 393 to 461 (AKKVGKTLKV…ADGHDLWGEV (69 aa)) enclose the TRAM domain.

The protein belongs to the methylthiotransferase family. RimO subfamily. Requires [4Fe-4S] cluster as cofactor.

The protein resides in the cytoplasm. The enzyme catalyses L-aspartate(89)-[ribosomal protein uS12]-hydrogen + (sulfur carrier)-SH + AH2 + 2 S-adenosyl-L-methionine = 3-methylsulfanyl-L-aspartate(89)-[ribosomal protein uS12]-hydrogen + (sulfur carrier)-H + 5'-deoxyadenosine + L-methionine + A + S-adenosyl-L-homocysteine + 2 H(+). Its function is as follows. Catalyzes the methylthiolation of an aspartic acid residue of ribosomal protein uS12. This Paraburkholderia xenovorans (strain LB400) protein is Ribosomal protein uS12 methylthiotransferase RimO.